Consider the following 469-residue polypeptide: 3-phosphoshikimate 1-carboxyvinyltransferase (469 aa).

The interval 21–45 (KDTILTHSDQPRPLQSRANGPLTGK) is disordered. 3-phosphoshikimate-binding residues include Lys52, Ser53, and Arg57. Residue Lys52 participates in phosphoenolpyruvate binding. Positions 125 and 153 each coordinate phosphoenolpyruvate. The 3-phosphoshikimate site is built by Ser199, Gln201, Asp352, and Lys379. Gln201 is a phosphoenolpyruvate binding site. Asp352 serves as the catalytic Proton acceptor. Residues Arg383 and Arg426 each contribute to the phosphoenolpyruvate site.

It belongs to the EPSP synthase family. Monomer.

It is found in the cytoplasm. The catalysed reaction is 3-phosphoshikimate + phosphoenolpyruvate = 5-O-(1-carboxyvinyl)-3-phosphoshikimate + phosphate. It functions in the pathway metabolic intermediate biosynthesis; chorismate biosynthesis; chorismate from D-erythrose 4-phosphate and phosphoenolpyruvate: step 6/7. In terms of biological role, catalyzes the transfer of the enolpyruvyl moiety of phosphoenolpyruvate (PEP) to the 5-hydroxyl of shikimate-3-phosphate (S3P) to produce enolpyruvyl shikimate-3-phosphate and inorganic phosphate. The protein is 3-phosphoshikimate 1-carboxyvinyltransferase of Bradyrhizobium diazoefficiens (strain JCM 10833 / BCRC 13528 / IAM 13628 / NBRC 14792 / USDA 110).